Reading from the N-terminus, the 523-residue chain is Endoglucanase 19 (523 aa).

A signal peptide spans 1–52 (MCSWSLSSHTLTSPVRQAAMEPKSSSCGGAGIRLRLLVVLHLLLLVPSSAMA). Asp107 (nucleophile) is an active-site residue. Asn279 carries an N-linked (GlcNAc...) asparagine glycan. Catalysis depends on residues His442, Asp493, and Glu502.

It belongs to the glycosyl hydrolase 9 (cellulase E) family.

It is found in the secreted. The catalysed reaction is Endohydrolysis of (1-&gt;4)-beta-D-glucosidic linkages in cellulose, lichenin and cereal beta-D-glucans.. The protein is Endoglucanase 19 of Oryza sativa subsp. japonica (Rice).